A 175-amino-acid chain; its full sequence is Flagellar assembly factor FliW (175 aa).

The protein belongs to the FliW family. As to quaternary structure, interacts with translational regulator CsrA and flagellin(s).

The protein localises to the cytoplasm. Acts as an anti-CsrA protein, binds CsrA and prevents it from repressing translation of its target genes, one of which is flagellin. Binds to flagellin and participates in the assembly of the flagellum. The chain is Flagellar assembly factor FliW from Bdellovibrio bacteriovorus (strain ATCC 15356 / DSM 50701 / NCIMB 9529 / HD100).